Reading from the N-terminus, the 392-residue chain is Acetyl-CoA acetyltransferase (392 aa).

C87 acts as the Acyl-thioester intermediate in catalysis. Catalysis depends on proton acceptor residues H348 and C378.

Belongs to the thiolase-like superfamily. Thiolase family.

Its subcellular location is the cytoplasm. The enzyme catalyses 2 acetyl-CoA = acetoacetyl-CoA + CoA. It participates in metabolic intermediate biosynthesis; (R)-mevalonate biosynthesis; (R)-mevalonate from acetyl-CoA: step 1/3. Involved in the production of polyhydroxyalkonic acids (PHAs), composed primarily of 3-hydroxybutyric acid (3HB) and 3-hydroxyvaleric acid (3HV). In Chromobacterium violaceum (strain ATCC 12472 / DSM 30191 / JCM 1249 / CCUG 213 / NBRC 12614 / NCIMB 9131 / NCTC 9757 / MK), this protein is Acetyl-CoA acetyltransferase (phaA).